The sequence spans 156 residues: Small ribosomal subunit protein uS7 (156 aa).

Belongs to the universal ribosomal protein uS7 family. Part of the 30S ribosomal subunit. Contacts proteins S9 and S11.

One of the primary rRNA binding proteins, it binds directly to 16S rRNA where it nucleates assembly of the head domain of the 30S subunit. Is located at the subunit interface close to the decoding center, probably blocks exit of the E-site tRNA. This is Small ribosomal subunit protein uS7 from Staphylococcus aureus (strain USA300).